Here is a 211-residue protein sequence, read N- to C-terminus: Large ribosomal subunit protein uL3 (211 aa).

Glutamine 150 carries the post-translational modification N5-methylglutamine.

It belongs to the universal ribosomal protein uL3 family. Part of the 50S ribosomal subunit. Forms a cluster with proteins L14 and L19. In terms of processing, methylated by PrmB.

Its function is as follows. One of the primary rRNA binding proteins, it binds directly near the 3'-end of the 23S rRNA, where it nucleates assembly of the 50S subunit. This Pseudomonas savastanoi pv. phaseolicola (strain 1448A / Race 6) (Pseudomonas syringae pv. phaseolicola (strain 1448A / Race 6)) protein is Large ribosomal subunit protein uL3.